Consider the following 520-residue polypeptide: Ribonuclease Y (520 aa).

Residues Thr-4–Val-24 traverse the membrane as a helical segment. The interval Lys-86–Glu-116 is disordered. Residues Thr-210–Leu-273 form the KH domain. Positions Val-336–Ala-429 constitute an HD domain.

The protein belongs to the RNase Y family.

The protein localises to the cell membrane. Its function is as follows. Endoribonuclease that initiates mRNA decay. This Bacillus cereus (strain ATCC 10987 / NRS 248) protein is Ribonuclease Y.